Reading from the N-terminus, the 274-residue chain is Diaminopimelate epimerase (274 aa).

Substrate contacts are provided by N13, Q47, and N65. The active-site Proton donor is C74. Substrate-binding positions include 75–76 (GN), N149, N182, and 200–201 (ER). C209 functions as the Proton acceptor in the catalytic mechanism. 210–211 (GT) is a binding site for substrate.

The protein belongs to the diaminopimelate epimerase family. Homodimer.

It localises to the cytoplasm. It carries out the reaction (2S,6S)-2,6-diaminopimelate = meso-2,6-diaminopimelate. The protein operates within amino-acid biosynthesis; L-lysine biosynthesis via DAP pathway; DL-2,6-diaminopimelate from LL-2,6-diaminopimelate: step 1/1. In terms of biological role, catalyzes the stereoinversion of LL-2,6-diaminopimelate (L,L-DAP) to meso-diaminopimelate (meso-DAP), a precursor of L-lysine and an essential component of the bacterial peptidoglycan. This chain is Diaminopimelate epimerase, found in Rhizorhabdus wittichii (strain DSM 6014 / CCUG 31198 / JCM 15750 / NBRC 105917 / EY 4224 / RW1) (Sphingomonas wittichii).